Reading from the N-terminus, the 245-residue chain is tRNA pseudouridine synthase A (245 aa).

Aspartate 52 acts as the Nucleophile in catalysis. Tyrosine 112 is a substrate binding site.

This sequence belongs to the tRNA pseudouridine synthase TruA family. In terms of assembly, homodimer.

The enzyme catalyses uridine(38/39/40) in tRNA = pseudouridine(38/39/40) in tRNA. Its function is as follows. Formation of pseudouridine at positions 38, 39 and 40 in the anticodon stem and loop of transfer RNAs. The protein is tRNA pseudouridine synthase A of Dictyoglomus turgidum (strain DSM 6724 / Z-1310).